The sequence spans 66 residues: Large ribosomal subunit protein bL33c (66 aa).

This sequence belongs to the bacterial ribosomal protein bL33 family.

The protein resides in the plastid. It localises to the chloroplast. The polypeptide is Large ribosomal subunit protein bL33c (Phalaenopsis aphrodite subsp. formosana (Moth orchid)).